The chain runs to 466 residues: Zinc finger and SCAN domain-containing protein 26 (466 aa).

Lys21 is covalently cross-linked (Glycyl lysine isopeptide (Lys-Gly) (interchain with G-Cter in SUMO2)). Positions 42 to 124 (CKQFRQLRYE…GILEDLQLDR (83 aa)) constitute an SCAN box domain. 2 stretches are compositionally biased toward basic and acidic residues: residues 124–135 (RGKAGEQKDSAQ) and 163–173 (KPEERGKETRS). A disordered region spans residues 124 to 182 (RGKAGEQKDSAQRSRPTVLVGEPAPRREAREQPGCALPQKPEERGKETRSENGNLIAGT). The C2H2-type 1; degenerate zinc-finger motif lies at 220-242 (SQCLETKERLVQNSGLIEHDRAH). 7 C2H2-type zinc fingers span residues 270-292 (HPCQ…QKIH), 298-320 (YQCK…LRIH), 326-348 (YLCI…QKIH), 354-376 (RECK…QRVH), 382-404 (HHCN…HRIH), 410-432 (FKCN…VRIH), and 438-460 (YKCS…QRHH).

It is found in the nucleus. Functionally, may be involved in transcriptional regulation. The protein is Zinc finger and SCAN domain-containing protein 26 (Zscan26) of Mus musculus (Mouse).